The sequence spans 211 residues: Orotate phosphoribosyltransferase (211 aa).

K26 contacts 5-phospho-alpha-D-ribose 1-diphosphate. 34-35 contributes to the orotate binding site; it reads FF. Residues 72–73, R98, K99, K102, H104, and 123–131 contribute to the 5-phospho-alpha-D-ribose 1-diphosphate site; these read YK and DDVITAGTA. Orotate is bound by residues T127 and R155.

Belongs to the purine/pyrimidine phosphoribosyltransferase family. PyrE subfamily. In terms of assembly, homodimer. Requires Mg(2+) as cofactor.

The enzyme catalyses orotidine 5'-phosphate + diphosphate = orotate + 5-phospho-alpha-D-ribose 1-diphosphate. The protein operates within pyrimidine metabolism; UMP biosynthesis via de novo pathway; UMP from orotate: step 1/2. Its function is as follows. Catalyzes the transfer of a ribosyl phosphate group from 5-phosphoribose 1-diphosphate to orotate, leading to the formation of orotidine monophosphate (OMP). The chain is Orotate phosphoribosyltransferase from Legionella pneumophila (strain Lens).